The chain runs to 140 residues: ATP synthase epsilon chain (140 aa).

This sequence belongs to the ATPase epsilon chain family. As to quaternary structure, F-type ATPases have 2 components, CF(1) - the catalytic core - and CF(0) - the membrane proton channel. CF(1) has five subunits: alpha(3), beta(3), gamma(1), delta(1), epsilon(1). CF(0) has three main subunits: a, b and c.

The protein localises to the cell inner membrane. Produces ATP from ADP in the presence of a proton gradient across the membrane. The sequence is that of ATP synthase epsilon chain from Laribacter hongkongensis (strain HLHK9).